We begin with the raw amino-acid sequence, 333 residues long: tRNA N6-adenosine threonylcarbamoyltransferase (333 aa).

Residues histidine 111 and histidine 115 each contribute to the Fe cation site. Substrate-binding positions include 134 to 138 (LVSGG), aspartate 167, glycine 180, and asparagine 272. Fe cation is bound at residue aspartate 300.

This sequence belongs to the KAE1 / TsaD family. Fe(2+) is required as a cofactor.

The protein localises to the cytoplasm. It catalyses the reaction L-threonylcarbamoyladenylate + adenosine(37) in tRNA = N(6)-L-threonylcarbamoyladenosine(37) in tRNA + AMP + H(+). In terms of biological role, required for the formation of a threonylcarbamoyl group on adenosine at position 37 (t(6)A37) in tRNAs that read codons beginning with adenine. Is involved in the transfer of the threonylcarbamoyl moiety of threonylcarbamoyl-AMP (TC-AMP) to the N6 group of A37, together with TsaE and TsaB. TsaD likely plays a direct catalytic role in this reaction. This Legionella pneumophila (strain Corby) protein is tRNA N6-adenosine threonylcarbamoyltransferase.